The following is a 61-amino-acid chain: Small ribosomal subunit protein uS14B (61 aa).

Positions 24, 27, 40, and 43 each coordinate Zn(2+).

Belongs to the universal ribosomal protein uS14 family. Zinc-binding uS14 subfamily. In terms of assembly, part of the 30S ribosomal subunit. Contacts proteins S3 and S10. Zn(2+) is required as a cofactor.

Functionally, binds 16S rRNA, required for the assembly of 30S particles and may also be responsible for determining the conformation of the 16S rRNA at the A site. The polypeptide is Small ribosomal subunit protein uS14B (Nocardia farcinica (strain IFM 10152)).